Reading from the N-terminus, the 455-residue chain is Argininosuccinate lyase (455 aa).

This sequence belongs to the lyase 1 family. Argininosuccinate lyase subfamily.

Its subcellular location is the cytoplasm. The catalysed reaction is 2-(N(omega)-L-arginino)succinate = fumarate + L-arginine. The protein operates within amino-acid biosynthesis; L-arginine biosynthesis; L-arginine from L-ornithine and carbamoyl phosphate: step 3/3. This Roseiflexus sp. (strain RS-1) protein is Argininosuccinate lyase.